The primary structure comprises 152 residues: Putative rho GDP-dissociation inhibitor 2 (152 aa).

This sequence belongs to the Rho GDI family.

The protein localises to the cytoplasm. Regulates the GDP/GTP exchange reaction of the Rho proteins by inhibiting the dissociation of GDP from them, and the subsequent binding of GTP to them. The polypeptide is Putative rho GDP-dissociation inhibitor 2 (rdiB) (Dictyostelium discoideum (Social amoeba)).